The primary structure comprises 273 residues: 4-diphosphocytidyl-2-C-methyl-D-erythritol kinase (273 aa).

Lysine 12 is a catalytic residue. ATP is bound at residue 90–100 (PVASGIGGGSA). Aspartate 122 is a catalytic residue.

Belongs to the GHMP kinase family. IspE subfamily.

It carries out the reaction 4-CDP-2-C-methyl-D-erythritol + ATP = 4-CDP-2-C-methyl-D-erythritol 2-phosphate + ADP + H(+). Its pathway is isoprenoid biosynthesis; isopentenyl diphosphate biosynthesis via DXP pathway; isopentenyl diphosphate from 1-deoxy-D-xylulose 5-phosphate: step 3/6. Catalyzes the phosphorylation of the position 2 hydroxy group of 4-diphosphocytidyl-2C-methyl-D-erythritol. This is 4-diphosphocytidyl-2-C-methyl-D-erythritol kinase from Paracoccus denitrificans (strain Pd 1222).